The sequence spans 312 residues: MEKKKIGLLVMAYGTPYKEEDIEPYYTHIRHGRKPDPEALQDLKERYEAIGGISPLAKITEEQTKALEKKLNANQDQYEFKAYIGLKHIHPFIEDTVEEMAKDGIKEAISLVLAPHYSTFSVKSYNKRANETAEKYGIQLDSVEDWYTEPGFIKFWADGIKATYAEMTEEERNNSVLIVSAHSLPEKILKDGDPYKHQLEETAKLIVEEADVKNYAVGWQSEGNTPDPWLGPDVQDLTRELYESEGYKAFIYTPVGFVADHLEVLYDNDYECKVVCDEIGASYYRPDMPNVHPEFIETLANVVMKKAKSEVR.

Residues Tyr13, Arg30, 46–47 (RY), Ser54, and Tyr125 each bind Fe-coproporphyrin III. Fe(2+) contacts are provided by His182 and Glu263.

It belongs to the ferrochelatase family.

Its subcellular location is the cytoplasm. The catalysed reaction is Fe-coproporphyrin III + 2 H(+) = coproporphyrin III + Fe(2+). The protein operates within porphyrin-containing compound metabolism; protoheme biosynthesis. Functionally, involved in coproporphyrin-dependent heme b biosynthesis. Catalyzes the insertion of ferrous iron into coproporphyrin III to form Fe-coproporphyrin III. This Oceanobacillus iheyensis (strain DSM 14371 / CIP 107618 / JCM 11309 / KCTC 3954 / HTE831) protein is Coproporphyrin III ferrochelatase.